The chain runs to 827 residues: Penicillin-binding protein 1A (827 aa).

The Cytoplasmic segment spans residues 1–18 (MGKKKKKRKSSAFKIILN). The helical; Signal-anchor for type II membrane protein transmembrane segment at 19 to 39 (VFLSIFLVAGVAFGGIVFAMI) threads the bilayer. The Extracellular portion of the chain corresponds to 40-827 (KTAPPLNVQQ…QNHEDNKNKQ (788 aa)). Residues 57–229 (SILYDDKGQY…PSVYYPYSSA (173 aa)) are transglycosylase. Glu96 (proton donor; for transglycosylase activity) is an active-site residue. A transpeptidase region spans residues 357-641 (ASAVIMDYHN…AARLWGDIMK (285 aa)). Ser398 (acyl-ester intermediate; for transpeptidase activity) is an active-site residue. The interval 755–827 (GSLPPTEEKN…QNHEDNKNKQ (73 aa)) is disordered. Residues 760–790 (TEEKNNSNTRDKNKDKNKDKDKNKNKDKNPS) show a composition bias toward basic and acidic residues. Over residues 791–817 (QDKPNNNNNNNNNDNNNNTKPPENDSN) the composition is skewed to low complexity. Residues 818 to 827 (QNHEDNKNKQ) show a composition bias toward basic and acidic residues.

The protein in the N-terminal section; belongs to the glycosyltransferase 51 family. It in the C-terminal section; belongs to the transpeptidase family.

The protein resides in the cell membrane. It catalyses the reaction [GlcNAc-(1-&gt;4)-Mur2Ac(oyl-L-Ala-gamma-D-Glu-L-Lys-D-Ala-D-Ala)](n)-di-trans,octa-cis-undecaprenyl diphosphate + beta-D-GlcNAc-(1-&gt;4)-Mur2Ac(oyl-L-Ala-gamma-D-Glu-L-Lys-D-Ala-D-Ala)-di-trans,octa-cis-undecaprenyl diphosphate = [GlcNAc-(1-&gt;4)-Mur2Ac(oyl-L-Ala-gamma-D-Glu-L-Lys-D-Ala-D-Ala)](n+1)-di-trans,octa-cis-undecaprenyl diphosphate + di-trans,octa-cis-undecaprenyl diphosphate + H(+). The enzyme catalyses Preferential cleavage: (Ac)2-L-Lys-D-Ala-|-D-Ala. Also transpeptidation of peptidyl-alanyl moieties that are N-acyl substituents of D-alanine.. Its pathway is cell wall biogenesis; peptidoglycan biosynthesis. Cell wall formation. Synthesis of cross-linked peptidoglycan from the lipid intermediates. The enzyme has a penicillin-insensitive transglycosylase N-terminal domain (formation of linear glycan strands) and a penicillin-sensitive transpeptidase C-terminal domain (cross-linking of the peptide subunits). This Clostridium botulinum (strain Langeland / NCTC 10281 / Type F) protein is Penicillin-binding protein 1A (pbpA).